The sequence spans 199 residues: ATP-dependent Clp protease proteolytic subunit (199 aa).

Serine 102 (nucleophile) is an active-site residue. Histidine 127 is an active-site residue.

The protein belongs to the peptidase S14 family. In terms of assembly, fourteen ClpP subunits assemble into 2 heptameric rings which stack back to back to give a disk-like structure with a central cavity, resembling the structure of eukaryotic proteasomes.

It is found in the cytoplasm. It catalyses the reaction Hydrolysis of proteins to small peptides in the presence of ATP and magnesium. alpha-casein is the usual test substrate. In the absence of ATP, only oligopeptides shorter than five residues are hydrolyzed (such as succinyl-Leu-Tyr-|-NHMec, and Leu-Tyr-Leu-|-Tyr-Trp, in which cleavage of the -Tyr-|-Leu- and -Tyr-|-Trp bonds also occurs).. Cleaves peptides in various proteins in a process that requires ATP hydrolysis. Has a chymotrypsin-like activity. Plays a major role in the degradation of misfolded proteins. This chain is ATP-dependent Clp protease proteolytic subunit, found in Pseudothermotoga lettingae (strain ATCC BAA-301 / DSM 14385 / NBRC 107922 / TMO) (Thermotoga lettingae).